Consider the following 118-residue polypeptide: Ribosome-binding factor A (118 aa).

It belongs to the RbfA family. In terms of assembly, monomer. Binds 30S ribosomal subunits, but not 50S ribosomal subunits or 70S ribosomes.

Its subcellular location is the cytoplasm. Functionally, one of several proteins that assist in the late maturation steps of the functional core of the 30S ribosomal subunit. Associates with free 30S ribosomal subunits (but not with 30S subunits that are part of 70S ribosomes or polysomes). Required for efficient processing of 16S rRNA. May interact with the 5'-terminal helix region of 16S rRNA. This chain is Ribosome-binding factor A, found in Geobacter sulfurreducens (strain ATCC 51573 / DSM 12127 / PCA).